Consider the following 39-residue polypeptide: Small basic protein 1 (39 aa).

At Gln1 the chain carries Pyrrolidone carboxylic acid. Disulfide bonds link Cys6–Cys32, Cys10–Cys26, and Cys14–Cys31.

It is found in the secreted. This chain is Small basic protein 1, found in Anas platyrhynchos (Mallard).